Reading from the N-terminus, the 166-residue chain is Regulatory protein RecX (166 aa).

The protein belongs to the RecX family.

It localises to the cytoplasm. Functionally, modulates RecA activity. In Shigella boydii serotype 18 (strain CDC 3083-94 / BS512), this protein is Regulatory protein RecX.